Consider the following 26-residue polypeptide: PRKCH upstream open reading frame 2 (26 aa).

Interacts with protein kinase C eta as well as other protein kinases including PRKCD, PRKCQ and PRKCE but not with PRKCG or PRKCZ; the interactions lead to inhibition of kinase activity.

In terms of biological role, product of an upstream open reading frame (ORF) of PRKCH which regulates translation of the downstream protein kinase C eta (PKC-eta) ORF. Functions as a repressive element that maintains low basal levels of PKC-eta in growing cells but enhances its expression during stress conditions induced by amino acid starvation in a EIF2AK4/GCN2-dependent manner. In addition to its role in regulating PKC-eta translation, also inhibits the kinase activity of PKC-eta as well as other protein kinases including PRKCD, PRKCQ and PRKCE but not PRKCA, PRKCG or PRKCZ. This Homo sapiens (Human) protein is PRKCH upstream open reading frame 2.